We begin with the raw amino-acid sequence, 628 residues long: EIN3-binding F-box protein 1 (628 aa).

An F-box domain is found at 61 to 109; the sequence is PVSIDVLPDECLFEIFRRLSGPQERSACAFVSKQWLTLVSSIRQKEIDV.

As to quaternary structure, part of a SCF (SKP1-cullin-F-box) protein ligase complex. Interacts with CUL1, SKP1A/ASK1, SKP1B/ASK2, ASK11, ASK12, ASK13, ASK18, EIN3, and EIL1. Ubiquitous.

It is found in the nucleus. The protein operates within protein modification; protein ubiquitination. Component of SCF(EBF1) E3 ubiquitin ligase complexes, which may mediate the ubiquitination and subsequent proteasomal degradation of target proteins (probably including EIN3 and EIL1). Regulator of the ethylene signaling cascade by modulating the stability of EIN3 and EIL1 proteins. Confers insensitivity to ethylene. This chain is EIN3-binding F-box protein 1 (EBF1), found in Arabidopsis thaliana (Mouse-ear cress).